Reading from the N-terminus, the 184-residue chain is Photosystem I assembly protein Ycf4 (184 aa).

The next 2 helical transmembrane spans lie at 22–42 (FGWACILFLGSLGFLVVGASS) and 57–77 (IVFFPQGIVMSFYGIAGLFIS).

It belongs to the Ycf4 family.

The protein localises to the plastid. The protein resides in the chloroplast thylakoid membrane. Functionally, seems to be required for the assembly of the photosystem I complex. This chain is Photosystem I assembly protein Ycf4, found in Acorus calamus (Sweet flag).